Here is a 227-residue protein sequence, read N- to C-terminus: Adapter protein MecA 1 (227 aa).

It belongs to the MecA family. In terms of assembly, homodimer.

Functionally, enables the recognition and targeting of unfolded and aggregated proteins to the ClpC protease or to other proteins involved in proteolysis. Acts negatively in the development of competence by binding ComK and recruiting it to the ClpCP protease. When overexpressed, inhibits sporulation. Also involved in Spx degradation by ClpC. This is Adapter protein MecA 1 (mecA1) from Bacillus anthracis.